The following is a 465-amino-acid chain: GTPase Der (465 aa).

EngA-type G domains follow at residues 3–166 and 184–358; these read FLVA…LNEF and IHFS…ACAN. GTP is bound by residues 9 to 16, 56 to 60, 118 to 121, 190 to 197, 237 to 241, and 302 to 305; these read GRANVGKS, DTGGI, NKVD, GRPNVGKS, DTAGV, and NKWD. The 85-residue stretch at 359–443 folds into the KH-like domain; it reads KKITTADATR…PIVFEFKQSE (85 aa).

Belongs to the TRAFAC class TrmE-Era-EngA-EngB-Septin-like GTPase superfamily. EngA (Der) GTPase family. As to quaternary structure, associates with the 50S ribosomal subunit.

GTPase that plays an essential role in the late steps of ribosome biogenesis. The chain is GTPase Der from Francisella philomiragia subsp. philomiragia (strain ATCC 25017 / CCUG 19701 / FSC 153 / O#319-036).